The primary structure comprises 1128 residues: Exportin-6 (1128 aa).

The region spanning 31–97 is the Importin N-terminal domain; that stretch reads IEELLNSFAG…RSCLPKLLLS (67 aa).

It belongs to the exportin family.

The protein resides in the nucleus. It localises to the cytoplasm. In terms of biological role, mediates the nuclear export of actin and profilin-actin complexes in somatic cells. The protein is Exportin-6 (xpo6) of Danio rerio (Zebrafish).